Here is a 155-residue protein sequence, read N- to C-terminus: Small ribosomal subunit protein bS16 (155 aa).

The disordered stretch occupies residues 100 to 155 (EAGIPDPAPSTEEPAAVCEASAEMAGQPGEVEPAGAAAEPNSQEPEPEEEKPQVEA). Positions 124 to 143 (AGQPGEVEPAGAAAEPNSQE) are enriched in low complexity.

This sequence belongs to the bacterial ribosomal protein bS16 family.

The protein is Small ribosomal subunit protein bS16 of Synechococcus sp. (strain JA-3-3Ab) (Cyanobacteria bacterium Yellowstone A-Prime).